A 345-amino-acid chain; its full sequence is S-adenosylmethionine:tRNA ribosyltransferase-isomerase (345 aa).

Belongs to the QueA family. In terms of assembly, monomer.

It localises to the cytoplasm. It catalyses the reaction 7-aminomethyl-7-carbaguanosine(34) in tRNA + S-adenosyl-L-methionine = epoxyqueuosine(34) in tRNA + adenine + L-methionine + 2 H(+). Its pathway is tRNA modification; tRNA-queuosine biosynthesis. Its function is as follows. Transfers and isomerizes the ribose moiety from AdoMet to the 7-aminomethyl group of 7-deazaguanine (preQ1-tRNA) to give epoxyqueuosine (oQ-tRNA). This chain is S-adenosylmethionine:tRNA ribosyltransferase-isomerase, found in Thermodesulfovibrio yellowstonii (strain ATCC 51303 / DSM 11347 / YP87).